The sequence spans 102 residues: Large ribosomal subunit protein bL21 (102 aa).

The protein belongs to the bacterial ribosomal protein bL21 family. Part of the 50S ribosomal subunit. Contacts protein L20.

Functionally, this protein binds to 23S rRNA in the presence of protein L20. The protein is Large ribosomal subunit protein bL21 of Shouchella clausii (strain KSM-K16) (Alkalihalobacillus clausii).